A 542-amino-acid polypeptide reads, in one-letter code: Chaperonin GroEL (542 aa).

ATP is bound by residues 29 to 32 (TMGP), K50, 86 to 90 (DGTTT), G414, 477 to 479 (NAA), and D493.

It belongs to the chaperonin (HSP60) family. Forms a cylinder of 14 subunits composed of two heptameric rings stacked back-to-back. Interacts with the co-chaperonin GroES.

The protein resides in the cytoplasm. It catalyses the reaction ATP + H2O + a folded polypeptide = ADP + phosphate + an unfolded polypeptide.. Functionally, together with its co-chaperonin GroES, plays an essential role in assisting protein folding. The GroEL-GroES system forms a nano-cage that allows encapsulation of the non-native substrate proteins and provides a physical environment optimized to promote and accelerate protein folding. This Sulfurimonas denitrificans (strain ATCC 33889 / DSM 1251) (Thiomicrospira denitrificans (strain ATCC 33889 / DSM 1251)) protein is Chaperonin GroEL.